A 430-amino-acid chain; its full sequence is Sorting nexin-4 (430 aa).

A compositionally biased stretch (polar residues) spans 1–18 (MDSASADASVTGSGNAKG). Positions 1-22 (MDSASADASVTGSGNAKGSSAE) are disordered. The PX domain occupies 33-162 (LEILVSDPQK…IFLVGNEWDT (130 aa)). Residues R83, K109, and R128 each contribute to the a 1,2-diacyl-sn-glycero-3-phospho-(1D-myo-inositol-3-phosphate) site. The stretch at 351–414 (ASRRDKINKL…NNLADENIKF (64 aa)) forms a coiled coil.

It belongs to the sorting nexin family.

The protein localises to the cytoplasm. It localises to the cytosol. The protein resides in the preautophagosomal structure membrane. Its subcellular location is the endosome membrane. In terms of biological role, sorting nexin, involved in the separation or division of vacuoles throughout the entire life cycle of the cells. Involved in retrieval of late-Golgi SNAREs from post-Golgi endosomes to the trans-Golgi network, for cytoplasm to vacuole transport (Cvt), and autophagy of large cargos including mitophagy, pexophagy and glycophagy. In Candida glabrata (strain ATCC 2001 / BCRC 20586 / JCM 3761 / NBRC 0622 / NRRL Y-65 / CBS 138) (Yeast), this protein is Sorting nexin-4 (SNX4).